Reading from the N-terminus, the 61-residue chain is MGMRMMFIIFLFVVLATTVVSFTSGRASDGRNAPANNKVSDLIRQFCCGHYDCDFIPNVCG.

The signal sequence occupies residues 1 to 21 (MGMRMMFIIFLFVVLATTVVS). A propeptide spanning residues 22–44 (FTSGRASDGRNAPANNKVSDLIR) is cleaved from the precursor. A Pyrrolidone carboxylic acid modification is found at Q45. 2 disulfide bridges follow: C47/C53 and C48/C60. C60 is subject to Cysteine amide.

It belongs to the conotoxin A superfamily. As to expression, expressed by the venom duct.

It localises to the secreted. Its function is as follows. Alpha-conotoxins act on postsynaptic membranes, they bind to the nicotinic acetylcholine receptors (nAChR) and thus inhibit them. This is Alpha-conotoxin-like Lp1.6a from Conus leopardus (Leopard cone).